The sequence spans 511 residues: Ribonuclease Y (511 aa).

Residues 3–23 (VGILIGIIILGVVGFIQYTLI) form a helical membrane-spanning segment. One can recognise a KH domain in the interval 201 to 286 (TVHVVALPND…EMVERAIKDV (86 aa)). Residues 327 to 420 (VLKHSIEVSY…VQAADAISAA (94 aa)) form the HD domain.

This sequence belongs to the RNase Y family.

It localises to the cell membrane. In terms of biological role, endoribonuclease that initiates mRNA decay. The protein is Ribonuclease Y of Clostridium perfringens (strain SM101 / Type A).